A 565-amino-acid chain; its full sequence is Probable protease Gilli_2517 (565 aa).

Functionally, probably a dedicated protease for substrate gasdermin bGSDM; cleaves the bGSDM precursor, releasing the pore-forming moiety, which integrates into the membrane and triggers cell death. Involved in defense against bacteriophages. Expression of bGSDM and this neighboring protease is not toxic in E.coli. The polypeptide is Probable protease Gilli_2517 (Gillisia limnaea (strain DSM 15749 / LMG 21470 / R-8282)).